We begin with the raw amino-acid sequence, 328 residues long: tRNA dimethylallyltransferase (328 aa).

19 to 26 provides a ligand contact to ATP; it reads GPTASGKT. 21–26 provides a ligand contact to substrate; it reads TASGKT. Interaction with substrate tRNA stretches follow at residues 50-53, 174-178, and 257-262; these read DSAL, QRIQR, and RCVGYR.

This sequence belongs to the IPP transferase family. As to quaternary structure, monomer. The cofactor is Mg(2+).

It carries out the reaction adenosine(37) in tRNA + dimethylallyl diphosphate = N(6)-dimethylallyladenosine(37) in tRNA + diphosphate. Functionally, catalyzes the transfer of a dimethylallyl group onto the adenine at position 37 in tRNAs that read codons beginning with uridine, leading to the formation of N6-(dimethylallyl)adenosine (i(6)A). In Leptothrix cholodnii (strain ATCC 51168 / LMG 8142 / SP-6) (Leptothrix discophora (strain SP-6)), this protein is tRNA dimethylallyltransferase.